A 239-amino-acid chain; its full sequence is Phospholipase A2 (239 aa).

The signal sequence occupies residues 1–19; it reads MSLIIVLVISVLSADAVLS. A propeptide spanning residues 20-105 is cleaved from the precursor; the sequence is MDNELYLNLE…GRCLSVGESE (86 aa). Residues W113, G115, and G117 each coordinate Ca(2+). 5 disulfide bridges follow: C114–C136, C135–C174, C142–C167, C165–C202, and C207–C217. H139 is an active-site residue. D140 provides a ligand contact to Ca(2+). The propeptide occupies 211–213; it reads RSP.

The protein belongs to the phospholipase A2 family. Group III subfamily. Heterodimer composed of a small subunit and a large subunit; disulfid-linked. It depends on Ca(2+) as a cofactor. As to expression, expressed by the venom gland.

The protein localises to the secreted. The catalysed reaction is a 1,2-diacyl-sn-glycero-3-phosphocholine + H2O = a 1-acyl-sn-glycero-3-phosphocholine + a fatty acid + H(+). Toxic phospholipase A2, which may catalyze the calcium-dependent hydrolysis of the 2-acyl groups in 3-sn-phosphoglycerides. Inhibits both skeletal (RYR1) and cardiac (RYR2) ryanodine receptors (calcium release channels). Probably blocks ryanodine receptors by generating a lipid product. In Hoffmannihadrurus gertschi (Scorpion), this protein is Phospholipase A2.